A 298-amino-acid polypeptide reads, in one-letter code: 4-hydroxy-tetrahydrodipicolinate synthase (298 aa).

Threonine 51 provides a ligand contact to pyruvate. Catalysis depends on tyrosine 139, which acts as the Proton donor/acceptor. The active-site Schiff-base intermediate with substrate is the lysine 167. Isoleucine 209 is a binding site for pyruvate.

This sequence belongs to the DapA family. In terms of assembly, homotetramer; dimer of dimers.

The protein localises to the cytoplasm. It carries out the reaction L-aspartate 4-semialdehyde + pyruvate = (2S,4S)-4-hydroxy-2,3,4,5-tetrahydrodipicolinate + H2O + H(+). It participates in amino-acid biosynthesis; L-lysine biosynthesis via DAP pathway; (S)-tetrahydrodipicolinate from L-aspartate: step 3/4. Functionally, catalyzes the condensation of (S)-aspartate-beta-semialdehyde [(S)-ASA] and pyruvate to 4-hydroxy-tetrahydrodipicolinate (HTPA). The sequence is that of 4-hydroxy-tetrahydrodipicolinate synthase from Haemophilus influenzae (strain PittEE).